A 149-amino-acid chain; its full sequence is 3-hydroxyacyl-[acyl-carrier-protein] dehydratase FabZ (149 aa).

Residue His53 is part of the active site.

This sequence belongs to the thioester dehydratase family. FabZ subfamily.

Its subcellular location is the cytoplasm. The enzyme catalyses a (3R)-hydroxyacyl-[ACP] = a (2E)-enoyl-[ACP] + H2O. Involved in unsaturated fatty acids biosynthesis. Catalyzes the dehydration of short chain beta-hydroxyacyl-ACPs and long chain saturated and unsaturated beta-hydroxyacyl-ACPs. This Polynucleobacter necessarius subsp. necessarius (strain STIR1) protein is 3-hydroxyacyl-[acyl-carrier-protein] dehydratase FabZ.